A 359-amino-acid chain; its full sequence is Heat-inducible transcription repressor HrcA (359 aa).

The protein belongs to the HrcA family.

In terms of biological role, negative regulator of class I heat shock genes (grpE-dnaK-dnaJ and groELS operons). Prevents heat-shock induction of these operons. The sequence is that of Heat-inducible transcription repressor HrcA from Sinorhizobium fredii (strain NBRC 101917 / NGR234).